The sequence spans 84 residues: Toxin Acra3 (84 aa).

The signal sequence occupies residues 1–17 (MKIIFLVLMMILSEVYS). The LCN-type CS-alpha/beta domain maps to 19–82 (RDGYPVHDGT…VYGDDGIFCK (64 aa)). 4 disulfides stabilise this stretch: C30–C81, C34–C57, C43–C62, and C47–C64. At S83 the chain carries Serine amide.

It belongs to the long (4 C-C) scorpion toxin superfamily. Sodium channel inhibitor family. Beta subfamily. As to expression, expressed by the venom gland.

The protein resides in the secreted. Functionally, toxin with unknown target. In vivo, induces severe neurotoxic events in mice such as excitability and convulsions, leading to the death of the animals within a few minutes after injection. Exerts very strong cytotoxic effect on a mouse brain tumor cell line (BC3H1) (IC(50)=5 mg/ml). It exerts its effects by inducing a stronger necrosis than apoptosis in BC3H1 cells. The polypeptide is Toxin Acra3 (Androctonus crassicauda (Arabian fat-tailed scorpion)).